The chain runs to 789 residues: Subtilisin-like protease Glyma18g48580 (789 aa).

The first 27 residues, 1–27 (MGSSIFCLHLILSSFFLFTFLLAAVNG), serve as a signal peptide directing secretion. In terms of domain architecture, Inhibitor I9 spans 32-116 (YIVYMGAHSH…VFLSKEHKLH (85 aa)). Residues 120–644 (SWEFLGLHRR…SGHVRPDLAI (525 aa)) enclose the Peptidase S8 domain. Active-site charge relay system residues include aspartate 150 and histidine 224. The 89-residue stretch at 401-489 (TFRDAQLCRR…RPHGVKTTAI (89 aa)) folds into the PA domain. Residues 468–499 (STVNTPPRRAKSRPHGVKTTAIGDEDDPLKTG) form a disordered region. Serine 576 serves as the catalytic Charge relay system.

Belongs to the peptidase S8 family. As to expression, expressed in roots, stems, flowers and young leaves. Barely detectable in matures leaves.

Its subcellular location is the secreted. In terms of biological role, produces a rapid alkalinization of the cellular media and the induction of defense-related genes, including chitinase 1b, chalcone synthase and CYP93A1. The receptor for GmSubPep is probably different from the receptor(s) for GmPep890 and GmPep914. The sequence is that of Subtilisin-like protease Glyma18g48580 from Glycine max (Soybean).